A 339-amino-acid chain; its full sequence is MO25-like protein 3 (339 aa).

The protein belongs to the Mo25 family.

The chain is MO25-like protein 3 (mop-25.3) from Caenorhabditis elegans.